The chain runs to 266 residues: Ras-like protein family member 12 (266 aa).

GTP contacts are provided by residues 27-34 (GRRGAGKS), 74-78 (DTADL), and 134-137 (NKLD).

This sequence belongs to the small GTPase superfamily. Ras family.

It catalyses the reaction GTP + H2O = GDP + phosphate + H(+). The chain is Ras-like protein family member 12 (RASL12) from Bos taurus (Bovine).